The primary structure comprises 416 residues: UDP-N-acetylglucosamine 1-carboxyvinyltransferase (416 aa).

22–23 (KN) serves as a coordination point for phosphoenolpyruvate. R92 lines the UDP-N-acetyl-alpha-D-glucosamine pocket. C116 acts as the Proton donor in catalysis. The residue at position 116 (C116) is a 2-(S-cysteinyl)pyruvic acid O-phosphothioketal. Residues 121-125 (RPVDQ), D304, and I326 contribute to the UDP-N-acetyl-alpha-D-glucosamine site.

The protein belongs to the EPSP synthase family. MurA subfamily.

It is found in the cytoplasm. The catalysed reaction is phosphoenolpyruvate + UDP-N-acetyl-alpha-D-glucosamine = UDP-N-acetyl-3-O-(1-carboxyvinyl)-alpha-D-glucosamine + phosphate. It participates in cell wall biogenesis; peptidoglycan biosynthesis. Its function is as follows. Cell wall formation. Adds enolpyruvyl to UDP-N-acetylglucosamine. This chain is UDP-N-acetylglucosamine 1-carboxyvinyltransferase, found in Janthinobacterium sp. (strain Marseille) (Minibacterium massiliensis).